A 354-amino-acid chain; its full sequence is NADH-quinone oxidoreductase subunit H (354 aa).

8 helical membrane passes run 25 to 45, 91 to 111, 126 to 146, 170 to 190, 205 to 225, 253 to 273, 290 to 310, and 330 to 350; these read LVRI…LILW, WLYL…WAVI, LLYA…AGWA, MGFA…SEIV, FLSW…ISGI, MAFA…SALA, FIPG…VFIW, and VFLP…MSPL.

This sequence belongs to the complex I subunit 1 family. In terms of assembly, NDH-1 is composed of 14 different subunits. Subunits NuoA, H, J, K, L, M, N constitute the membrane sector of the complex.

It localises to the cell inner membrane. It catalyses the reaction a quinone + NADH + 5 H(+)(in) = a quinol + NAD(+) + 4 H(+)(out). In terms of biological role, NDH-1 shuttles electrons from NADH, via FMN and iron-sulfur (Fe-S) centers, to quinones in the respiratory chain. The immediate electron acceptor for the enzyme in this species is believed to be ubiquinone. Couples the redox reaction to proton translocation (for every two electrons transferred, four hydrogen ions are translocated across the cytoplasmic membrane), and thus conserves the redox energy in a proton gradient. This subunit may bind ubiquinone. The protein is NADH-quinone oxidoreductase subunit H of Burkholderia mallei (strain ATCC 23344).